Here is a 319-residue protein sequence, read N- to C-terminus: Forkhead box protein E3 (319 aa).

The interval 1 to 69 (MAGRSDMDPP…GRRRRRPLQR (69 aa)) is disordered. Residues 44–53 (AAAGRGEAAP) show a composition bias toward low complexity. The fork-head DNA-binding region spans 71–165 (KPPYSYIALI…DNGSFLRRRK (95 aa)).

Its subcellular location is the nucleus. Functionally, transcription factor that controls lens epithelial cell growth through regulation of proliferation, apoptosis and cell cycle. During lens development, controls the ratio of the lens fiber cells to the cells of the anterior lens epithelium by regulating the rate of proliferation and differentiation. Controls lens vesicle closure and subsequent separation of the lens vesicle from ectoderm. Controls the expression of DNAJB1 in a pathway that is crucial for the development of the anterior segment of the eye. In Homo sapiens (Human), this protein is Forkhead box protein E3 (FOXE3).